We begin with the raw amino-acid sequence, 132 residues long: Small ribosomal subunit protein uS8 (132 aa).

It belongs to the universal ribosomal protein uS8 family. Part of the 30S ribosomal subunit. Contacts proteins S5 and S12.

Its function is as follows. One of the primary rRNA binding proteins, it binds directly to 16S rRNA central domain where it helps coordinate assembly of the platform of the 30S subunit. The protein is Small ribosomal subunit protein uS8 of Lactococcus lactis subsp. lactis (strain IL1403) (Streptococcus lactis).